A 328-amino-acid chain; its full sequence is Alanine racemase (328 aa).

The active-site Proton acceptor; specific for D-alanine is the Lys-33. Position 33 is an N6-(pyridoxal phosphate)lysine (Lys-33). Arg-118 provides a ligand contact to substrate. Tyr-237 acts as the Proton acceptor; specific for L-alanine in catalysis. Met-283 is a binding site for substrate.

The protein belongs to the alanine racemase family. It depends on pyridoxal 5'-phosphate as a cofactor.

It carries out the reaction L-alanine = D-alanine. Its pathway is amino-acid biosynthesis; D-alanine biosynthesis; D-alanine from L-alanine: step 1/1. Functionally, catalyzes the interconversion of L-alanine and D-alanine. May also act on other amino acids. The protein is Alanine racemase (alr) of Campylobacter jejuni (strain RM1221).